We begin with the raw amino-acid sequence, 224 residues long: 7-cyano-7-deazaguanine synthase (224 aa).

10-20 (LSGGLDSATVV) serves as a coordination point for ATP. Residues Cys189, Cys199, Cys202, and Cys205 each coordinate Zn(2+).

It belongs to the QueC family. Zn(2+) serves as cofactor.

The enzyme catalyses 7-carboxy-7-deazaguanine + NH4(+) + ATP = 7-cyano-7-deazaguanine + ADP + phosphate + H2O + H(+). The protein operates within purine metabolism; 7-cyano-7-deazaguanine biosynthesis. Functionally, catalyzes the ATP-dependent conversion of 7-carboxy-7-deazaguanine (CDG) to 7-cyano-7-deazaguanine (preQ(0)). In Pseudomonas fluorescens (strain SBW25), this protein is 7-cyano-7-deazaguanine synthase.